Consider the following 653-residue polypeptide: Alpha-L-iduronidase (653 aa).

The signal sequence occupies residues 1–27 (MRPLRPRAALLALLASLLAAPPVAPAE). Alpha-D-mannopyranose is bound by residues proline 54, leucine 56, and histidine 58. Histidine 91 is a binding site for alpha-L-iduronate. Asparagine 110 carries N-linked (GlcNAc...) asparagine glycosylation. Asparagine 181 and glutamate 182 together coordinate alpha-L-iduronate. The active-site Proton donor is glutamate 182. An N-linked (GlcNAc...) asparagine glycan is attached at asparagine 190. Lysine 264, glutamate 299, and glycine 305 together coordinate alpha-L-iduronate. Glutamate 299 acts as the Nucleophile in catalysis. Tryptophan 306 is an alpha-D-mannopyranose binding site. An N-linked (GlcNAc...) asparagine glycan is attached at asparagine 336. The alpha-L-iduronate site is built by aspartate 349 and arginine 363. N-linked (GlcNAc...) asparagine glycans are attached at residues asparagine 372, asparagine 415, and asparagine 451. Residues arginine 488 and arginine 492 each coordinate alpha-D-mannopyranose. Arginine 492 contributes to the beta-D-mannose binding site. The cysteines at positions 541 and 577 are disulfide-linked.

Belongs to the glycosyl hydrolase 39 family. Monomer. N-glycosylation at Asn-372 contributes to substrate binding and is required for full enzymatic activity. As to expression, ubiquitous.

It is found in the lysosome. The enzyme catalyses Hydrolysis of unsulfated alpha-L-iduronosidic linkages in dermatan sulfate.. This chain is Alpha-L-iduronidase (IDUA), found in Homo sapiens (Human).